Consider the following 830-residue polypeptide: Ribosome biogenesis protein ERB1 (830 aa).

The tract at residues Met-1–Lys-141 is disordered. Acidic residues-rich tracts occupy residues Val-35–Gly-44 and Met-52–Ser-109. A compositionally biased stretch (basic and acidic residues) spans Glu-131–Lys-141. 6 WD repeats span residues Pro-481–Arg-520, Leu-523–Ile-563, Lys-660–Thr-698, Ser-701–Lys-740, Tyr-744–Gln-783, and Ile-799–Ser-830.

It belongs to the WD repeat BOP1/ERB1 family. In terms of assembly, component of the NOP7 complex, composed of ERB1, NOP7 and YTM1. The complex is held together by ERB1, which interacts with NOP7 via its N-terminal domain and with YTM1 via a high-affinity interaction between the seven-bladed beta-propeller domains of the 2 proteins. The NOP7 complex associates with the 66S pre-ribosome.

It is found in the nucleus. It localises to the nucleolus. Its subcellular location is the nucleoplasm. Its function is as follows. Component of the NOP7 complex, which is required for maturation of the 25S and 5.8S ribosomal RNAs and formation of the 60S ribosome. The protein is Ribosome biogenesis protein ERB1 of Cryptococcus neoformans var. neoformans serotype D (strain B-3501A) (Filobasidiella neoformans).